The following is a 740-amino-acid chain: Ribosomal protein S6 kinase alpha-3 (740 aa).

The segment at 1-38 (MPLAQLADPWQKMAVESPSDSAENGQQIMDEPMGEEEI) is disordered. The segment covering 18–27 (PSDSAENGQQ) has biased composition (polar residues). In terms of domain architecture, Protein kinase 1 spans 68–327 (FELLKVLGQG…VEEIKRHSFF (260 aa)). ATP is bound by residues 74–82 (LGQGSFGKV) and Lys100. Asp193 acts as the Proton acceptor in catalysis. Ser227 is modified (phosphoserine; by PDPK1). An AGC-kinase C-terminal domain is found at 328-397 (STIDWNKLYR…VAITSDDESQ (70 aa)). A Phosphothreonine modification is found at Thr365. 2 positions are modified to phosphoserine: Ser369 and Ser375. At Ser386 the chain carries Phosphoserine; by autocatalysis and MAPKAPK2. Phosphoserine is present on Ser415. The region spanning 422–679 (YEVKEDIGVG…AALVLRHPWI (258 aa)) is the Protein kinase 2 domain. ATP is bound by residues 428–436 (IGVGSYSVC) and Lys451. Tyr529 carries the post-translational modification Phosphotyrosine; by FGFR3. The Proton acceptor role is filled by Asp539. Phosphoserine occurs at positions 556 and 715.

This sequence belongs to the protein kinase superfamily. AGC Ser/Thr protein kinase family. S6 kinase subfamily. Forms a complex with either MAPK1/ERK2 or MAPK3/ERK1 in quiescent cells. Transiently dissociates following mitogenic stimulation. Interacts with NFATC4, ETV1/ER81 and FGFR1. Requires Mg(2+) as cofactor. Activated by phosphorylation at Ser-227 by PDPK1. Autophosphorylated on Ser-386, as part of the activation process. May be phosphorylated at Thr-365 and Ser-369 by MAPK1/ERK2 and MAPK3/ERK1. Can also be activated via phosphorylation at Ser-386 by MAPKAPK2. Post-translationally, N-terminal myristoylation results in an activated kinase in the absence of added growth factors. In terms of tissue distribution, expressed in many tissues, highest levels in skeletal muscle.

Its subcellular location is the nucleus. The protein resides in the cytoplasm. It carries out the reaction L-seryl-[protein] + ATP = O-phospho-L-seryl-[protein] + ADP + H(+). It catalyses the reaction L-threonyl-[protein] + ATP = O-phospho-L-threonyl-[protein] + ADP + H(+). Upon extracellular signal or mitogen stimulation, phosphorylated at Thr-577 in the C-terminal kinase domain (CTKD) by MAPK1/ERK2 and MAPK3/ERK1. The activated CTKD then autophosphorylates Ser-386, allowing binding of PDPK1, which in turn phosphorylates Ser-227 in the N-terminal kinase domain (NTDK) leading to the full activation of the protein and subsequent phosphorylation of the substrates by the NTKD. Functionally, serine/threonine-protein kinase that acts downstream of ERK (MAPK1/ERK2 and MAPK3/ERK1) signaling and mediates mitogenic and stress-induced activation of the transcription factors CREB1, ETV1/ER81 and NR4A1/NUR77, regulates translation through RPS6 and EIF4B phosphorylation, and mediates cellular proliferation, survival, and differentiation by modulating mTOR signaling and repressing pro-apoptotic function of BAD and DAPK1. In fibroblast, is required for EGF-stimulated phosphorylation of CREB1 and histone H3 at 'Ser-10', which results in the subsequent transcriptional activation of several immediate-early genes. In response to mitogenic stimulation (EGF and PMA), phosphorylates and activates NR4A1/NUR77 and ETV1/ER81 transcription factors and the cofactor CREBBP. Upon insulin-derived signal, acts indirectly on the transcription regulation of several genes by phosphorylating GSK3B at 'Ser-9' and inhibiting its activity. Phosphorylates RPS6 in response to serum or EGF via an mTOR-independent mechanism and promotes translation initiation by facilitating assembly of the preinitiation complex. In response to insulin, phosphorylates EIF4B, enhancing EIF4B affinity for the EIF3 complex and stimulating cap-dependent translation. Is involved in the mTOR nutrient-sensing pathway by directly phosphorylating TSC2 at 'Ser-1798', which potently inhibits TSC2 ability to suppress mTOR signaling, and mediates phosphorylation of RPTOR, which regulates mTORC1 activity and may promote rapamycin-sensitive signaling independently of the PI3K/AKT pathway. Mediates cell survival by phosphorylating the pro-apoptotic proteins BAD and DAPK1 and suppressing their pro-apoptotic function. Promotes the survival of hepatic stellate cells by phosphorylating CEBPB in response to the hepatotoxin carbon tetrachloride (CCl4). Is involved in cell cycle regulation by phosphorylating the CDK inhibitor CDKN1B, which promotes CDKN1B association with 14-3-3 proteins and prevents its translocation to the nucleus and inhibition of G1 progression. In LPS-stimulated dendritic cells, is involved in TLR4-induced macropinocytosis, and in myeloma cells, acts as effector of FGFR3-mediated transformation signaling, after direct phosphorylation at Tyr-529 by FGFR3. Negatively regulates EGF-induced MAPK1/3 phosphorylation via phosphorylation of SOS1. Phosphorylates SOS1 at 'Ser-1134' and 'Ser-1161' that create YWHAB and YWHAE binding sites and which contribute to the negative regulation of MAPK1/3 phosphorylation. Phosphorylates EPHA2 at 'Ser-897', the RPS6KA-EPHA2 signaling pathway controls cell migration. Acts as a regulator of osteoblast differentiation by mediating phosphorylation of ATF4, thereby promoting ATF4 transactivation activity. In Homo sapiens (Human), this protein is Ribosomal protein S6 kinase alpha-3 (RPS6KA3).